Here is a 403-residue protein sequence, read N- to C-terminus: Flavohemoprotein (403 aa).

One can recognise a Globin domain in the interval 1 to 138; sequence MLTPEQKAIV…LADLMIGIEK (138 aa). H85 contributes to the heme b binding site. Active-site charge relay system residues include Y95 and E137. Residues 149-403 are reductase; that stretch reads GGWRDFRPFR…SQSFAPVILG (255 aa). The FAD-binding FR-type domain maps to 152–257; the sequence is RDFRPFRVAR…HVPAGDFVLQ (106 aa). Residues Y190 and 206-209 each bind FAD; that span reads RQYS. Position 269-274 (269-274) interacts with NADP(+); sequence GVGITP. 390-393 serves as a coordination point for FAD; it reads TFGP.

This sequence belongs to the globin family. Two-domain flavohemoproteins subfamily. It in the C-terminal section; belongs to the flavoprotein pyridine nucleotide cytochrome reductase family. It depends on heme b as a cofactor. Requires FAD as cofactor.

It carries out the reaction 2 nitric oxide + NADPH + 2 O2 = 2 nitrate + NADP(+) + H(+). The enzyme catalyses 2 nitric oxide + NADH + 2 O2 = 2 nitrate + NAD(+) + H(+). This chain is Flavohemoprotein, found in Deinococcus radiodurans (strain ATCC 13939 / DSM 20539 / JCM 16871 / CCUG 27074 / LMG 4051 / NBRC 15346 / NCIMB 9279 / VKM B-1422 / R1).